Here is a 303-residue protein sequence, read N- to C-terminus: MKSKKPRSLLGIEGMESKEINALLKLAARMEPTRRRNTLRGKTVVLLFYENSTRTRSSFELAAKVLGATTILITATASSIEKGESLIDTGYTVRALGADAIVMRHPSSGAHWLLAEHLDIPIINAGDGMHEHPSQGLLDALTILQAKKKFKGLKIAIVGDIYHSRVARSNVHLLPKLGAKVVLCGPPDLCPDEMAKIASGIEVSHNLDHALSGADVVMSLRVQKERLVGRQIGVEDYIANYQITPEKLALAKKDAVLMHPGPIIRGMELTSEVADGHASKILAQVHNGVKVRMAILQTLLAKN.

Carbamoyl phosphate-binding residues include Arg-54 and Thr-55. Lys-82 serves as a coordination point for L-aspartate. The carbamoyl phosphate site is built by Arg-104, His-132, and Gln-135. 2 residues coordinate L-aspartate: Arg-165 and Arg-221. The carbamoyl phosphate site is built by Gly-261 and Pro-262.

Belongs to the aspartate/ornithine carbamoyltransferase superfamily. ATCase family. As to quaternary structure, heterododecamer (2C3:3R2) of six catalytic PyrB chains organized as two trimers (C3), and six regulatory PyrI chains organized as three dimers (R2).

It catalyses the reaction carbamoyl phosphate + L-aspartate = N-carbamoyl-L-aspartate + phosphate + H(+). The protein operates within pyrimidine metabolism; UMP biosynthesis via de novo pathway; (S)-dihydroorotate from bicarbonate: step 2/3. Its function is as follows. Catalyzes the condensation of carbamoyl phosphate and aspartate to form carbamoyl aspartate and inorganic phosphate, the committed step in the de novo pyrimidine nucleotide biosynthesis pathway. The polypeptide is Aspartate carbamoyltransferase catalytic subunit (Koribacter versatilis (strain Ellin345)).